We begin with the raw amino-acid sequence, 266 residues long: UPF0354 protein lmo1608 (266 aa).

The protein belongs to the UPF0354 family.

The protein is UPF0354 protein lmo1608 of Listeria monocytogenes serovar 1/2a (strain ATCC BAA-679 / EGD-e).